Consider the following 185-residue polypeptide: Ribosome-recycling factor (185 aa).

Belongs to the RRF family.

It is found in the cytoplasm. In terms of biological role, responsible for the release of ribosomes from messenger RNA at the termination of protein biosynthesis. May increase the efficiency of translation by recycling ribosomes from one round of translation to another. This chain is Ribosome-recycling factor, found in Kineococcus radiotolerans (strain ATCC BAA-149 / DSM 14245 / SRS30216).